Consider the following 371-residue polypeptide: Zinc transporter ZIP13 (371 aa).

Residues 1 to 7 lie on the Lumenal side of the membrane; that stretch reads MPGCPCP. Residues 8 to 28 traverse the membrane as a helical segment; that stretch reads GCGMAGPRLLFLTALALELLE. Topologically, residues 29-68 are cytoplasmic; that stretch reads RAGGSQPALRSRGTATACRLDNKESESWGALLSGERLDTW. The helical transmembrane segment at 69–89 threads the bilayer; it reads ICSLLGSLMVGLSGVFPLLVI. At 90 to 108 the chain is on the lumenal side; it reads PLEMGTMLRSEAGAWRLKQ. The chain crosses the membrane as a helical span at residues 109 to 129; the sequence is LLSFALGGLLGNVFLHLLPEA. Residues 130–149 are Cytoplasmic-facing; it reads WAYTCSASPGGEGQSLQQQQ. A helical membrane pass occupies residues 150-170; the sequence is QLGLWVIAGILTFLALEKMFL. Residues 171–235 are Lumenal-facing; that stretch reads DSKEEGTSQA…TIDNFTHGLA (65 aa). The helical transmembrane segment at 236 to 256 threads the bilayer; the sequence is VAASFLVSKKIGLLTTMAILL. The XEXPHE-motif motif lies at 257-262; the sequence is HEIPHE. At 257–278 the chain is on the cytoplasmic side; the sequence is HEIPHEVGDFAILLRAGFDRWS. A helical membrane pass occupies residues 279 to 299; that stretch reads AAKLQLSTALGGLLGAGFAIC. Over 300-316 the chain is Lumenal; it reads TQSPKGVVGCSPAAEET. The helical transmembrane segment at 317-337 threads the bilayer; sequence AAWVLPFTSGGFLYIALVNVL. The Cytoplasmic segment spans residues 338 to 349; sequence PDLLEEEDPWRS. A helical transmembrane segment spans residues 350–370; it reads LQQLLLLCAGIVVMVLFSLFV. Position 371 (aspartate 371) is a topological domain, lumenal.

It belongs to the ZIP transporter (TC 2.A.5) family. Homodimer.

It is found in the golgi apparatus membrane. Its subcellular location is the cytoplasmic vesicle membrane. The protein resides in the endoplasmic reticulum membrane. It catalyses the reaction Zn(2+)(in) = Zn(2+)(out). Its function is as follows. Functions as a zinc transporter transporting Zn(2+) from the Golgi apparatus to the cytosol and thus influences the zinc level at least in areas of the cytosol. May regulate beige adipocyte differentiation. The sequence is that of Zinc transporter ZIP13 from Homo sapiens (Human).